Here is a 341-residue protein sequence, read N- to C-terminus: Malate dehydrogenase 2, mitochondrial (341 aa).

The transit peptide at 1-22 directs the protein to the mitochondrion; the sequence is MFRSMIVRSASPVKQGLLRRGF. Residues 36–42 and Asp62 each bind NAD(+); that span reads GAAGGIG. 2 residues coordinate substrate: Arg109 and Arg115. NAD(+) contacts are provided by residues Asn122 and 145 to 147; that span reads ISN. Residues Asn147 and Arg181 each contribute to the substrate site. His205 acts as the Proton acceptor in catalysis. Met256 is a binding site for NAD(+).

Belongs to the LDH/MDH superfamily. MDH type 1 family. In terms of assembly, homodimer. In terms of tissue distribution, expressed in rosette leaves at low levels.

Its subcellular location is the mitochondrion matrix. It carries out the reaction (S)-malate + NAD(+) = oxaloacetate + NADH + H(+). Its function is as follows. Catalyzes a reversible NAD-dependent dehydrogenase reaction involved in central metabolism and redox homeostasis between organelle compartments. Required for carbon dioxide and energy partitioning in leaves. May limit photorespiration during the dark phase. Can convert 2-ketoglutarate to L-2-hydroxyglutarate in vitro. The chain is Malate dehydrogenase 2, mitochondrial from Arabidopsis thaliana (Mouse-ear cress).